The sequence spans 352 residues: tRNA-specific 2-thiouridylase MnmA (352 aa).

An ATP-binding site is contributed by 6–13; that stretch reads AVSGGTDS. The active-site Nucleophile is the cysteine 92. The cysteines at positions 92 and 189 are disulfide-linked. ATP is bound at residue glycine 116. The interval 139–141 is interaction with tRNA; that stretch reads KDQ. The active-site Cysteine persulfide intermediate is the cysteine 189. Positions 294–295 are interaction with tRNA; the sequence is RY.

The protein belongs to the MnmA/TRMU family.

Its subcellular location is the cytoplasm. The enzyme catalyses S-sulfanyl-L-cysteinyl-[protein] + uridine(34) in tRNA + AH2 + ATP = 2-thiouridine(34) in tRNA + L-cysteinyl-[protein] + A + AMP + diphosphate + H(+). Functionally, catalyzes the 2-thiolation of uridine at the wobble position (U34) of tRNA, leading to the formation of s(2)U34. This chain is tRNA-specific 2-thiouridylase MnmA, found in Lawsonia intracellularis (strain PHE/MN1-00).